Reading from the N-terminus, the 151-residue chain is Putative pre-16S rRNA nuclease (151 aa).

Belongs to the YqgF nuclease family.

It is found in the cytoplasm. In terms of biological role, could be a nuclease involved in processing of the 5'-end of pre-16S rRNA. This Thermosynechococcus vestitus (strain NIES-2133 / IAM M-273 / BP-1) protein is Putative pre-16S rRNA nuclease.